Here is a 316-residue protein sequence, read N- to C-terminus: Peroxisomal targeting signal 2 receptor (316 aa).

6 WD repeats span residues 56–96 (DTRD…GGRP), 102–142 (EHTK…SLKT), 145–185 (EHRY…SLNT), 188–228 (AHDH…RPTT), 232–272 (GHTY…DPII), and 277–316 (HHTE…GQFR).

It belongs to the WD repeat peroxin-7 family. In terms of assembly, interacts with PEX5; interaction only takes place when PEX7 is associated with cargo proteins.

The protein localises to the cytoplasm. It is found in the cytosol. It localises to the peroxisome matrix. Its function is as follows. Receptor required for the peroxisomal import of proteins containing a C-terminal PTS2-type peroxisomal targeting signal. Specifically binds to cargo proteins containing a PTS2 peroxisomal targeting signal in the cytosol. Cargo protein-binding triggers interaction with PEX5 and formation of a ternary complex composed of PEX5 and PEX7 along with PTS2-containing cargo proteins, which is tranlocated into peroxisomes by passing through the PEX13-PEX14 docking complex. The polypeptide is Peroxisomal targeting signal 2 receptor (pex7) (Dictyostelium discoideum (Social amoeba)).